The sequence spans 552 residues: Ribosomal lysine N-methyltransferase 3 (552 aa).

Residues 26–335 (SKCDIRESPL…QGQEIFNSYG (310 aa)) form the SET domain. Position 334 (tyrosine 334) interacts with S-adenosyl-L-methionine. A disordered region spans residues 399–432 (EDEEDEDGQAKSDNLSDDIESEEEEEEEEGDDSL). A compositionally biased stretch (acidic residues) spans 413–432 (LSDDIESEEEEEEEEGDDSL).

The protein belongs to the class V-like SAM-binding methyltransferase superfamily.

The protein localises to the nucleus. In terms of biological role, S-adenosyl-L-methionine-dependent protein-lysine N-methyltransferase that monomethylates 60S ribosomal protein L42 (RPL42A and RPL42B) at 'Lys-40'. The protein is Ribosomal lysine N-methyltransferase 3 of Saccharomyces cerevisiae (strain ATCC 204508 / S288c) (Baker's yeast).